Reading from the N-terminus, the 572-residue chain is Hemagglutinin-neuraminidase (572 aa).

Over 1-31 the chain is Intravirion; that stretch reads MEYWKHTNHGKDAGNELETSMATHGNKLTNK. The chain crosses the membrane as a helical span at residues 32-52; the sequence is ITYILWTIILVLLSIVFIIVL. At 53-572 the chain is on the virion surface side; the sequence is INSIKSEKAH…FKTEIPKSCS (520 aa). 2 disulfides stabilise this stretch: Cys-190/Cys-214 and Cys-256/Cys-269. The interval 252–257 is involved in neuraminidase activity; that stretch reads NRKSCS. Residues Asn-308 and Asn-351 are each glycosylated (N-linked (GlcNAc...) asparagine; by host). Intrachain disulfides connect Cys-355–Cys-469 and Cys-463–Cys-473. An N-linked (GlcNAc...) asparagine; by host glycan is attached at Asn-523. Cys-535 and Cys-544 are joined by a disulfide.

The protein belongs to the paramyxoviruses hemagglutinin-neuraminidase family. Homotetramer; composed of disulfide-linked homodimers. Interacts with F protein trimer.

Its subcellular location is the virion membrane. The protein localises to the host cell membrane. The catalysed reaction is Hydrolysis of alpha-(2-&gt;3)-, alpha-(2-&gt;6)-, alpha-(2-&gt;8)- glycosidic linkages of terminal sialic acid residues in oligosaccharides, glycoproteins, glycolipids, colominic acid and synthetic substrates.. Functionally, attaches the virus to sialic acid-containing cell receptors and thereby initiating infection. Binding of HN protein to the receptor induces a conformational change that allows the F protein to trigger virion/cell membranes fusion. Neuraminidase activity ensures the efficient spread of the virus by dissociating the mature virions from the neuraminic acid containing glycoproteins. This is Hemagglutinin-neuraminidase (HN) from Homo sapiens (Human).